Reading from the N-terminus, the 177-residue chain is Large ribosomal subunit protein uL6 (177 aa).

Belongs to the universal ribosomal protein uL6 family. Part of the 50S ribosomal subunit.

Its function is as follows. This protein binds to the 23S rRNA, and is important in its secondary structure. It is located near the subunit interface in the base of the L7/L12 stalk, and near the tRNA binding site of the peptidyltransferase center. This is Large ribosomal subunit protein uL6 from Roseobacter denitrificans (strain ATCC 33942 / OCh 114) (Erythrobacter sp. (strain OCh 114)).